Here is a 254-residue protein sequence, read N- to C-terminus: Hydroxyacylglutathione hydrolase (254 aa).

Zn(2+) is bound by residues His52, His54, Asp56, His57, His109, Asp126, and His164.

This sequence belongs to the metallo-beta-lactamase superfamily. Glyoxalase II family. As to quaternary structure, monomer. Requires Zn(2+) as cofactor.

The catalysed reaction is an S-(2-hydroxyacyl)glutathione + H2O = a 2-hydroxy carboxylate + glutathione + H(+). It functions in the pathway secondary metabolite metabolism; methylglyoxal degradation; (R)-lactate from methylglyoxal: step 2/2. Thiolesterase that catalyzes the hydrolysis of S-D-lactoyl-glutathione to form glutathione and D-lactic acid. The polypeptide is Hydroxyacylglutathione hydrolase (Stenotrophomonas maltophilia (strain R551-3)).